The chain runs to 169 residues: Secretory-abundant heat soluble protein 1 (169 aa).

The N-terminal stretch at 1 to 19 is a signal peptide; sequence MSRAAVAIALLGCVVAAYG. Positions 31-60 are SAHS-c1; that stretch reads EWTGKSWMGKWESTDRIENFDAFISALGLP. Positions 75-103 are SAHS-c2; the sequence is WKEGDHYHHQISVPDKNYKNDVNFKLNEE. A glycan (N-linked (GlcNAc...) asparagine) is linked at Asn109. The segment at 116–165 is SAHS-c3; sequence KYTEDGGNLKAEVHVPSRNKVIHDEYKVNGDELEKTYKVGDVTAKRWYKK.

The protein belongs to the Secretory-abundant heat soluble protein (SAHS) family.

It localises to the secreted. In terms of biological role, secreted heat soluble protein acting as a molecular shield in water-deficient condition. Tardigrade-specific intrinsically disordered proteins (TDPs) are essential for desiccation tolerance by forming non-crystalline amorphous solids upon desiccation, and this vitrified state mirrors their protective capabilities. This chain is Secretory-abundant heat soluble protein 1, found in Ramazzottius varieornatus (Water bear).